We begin with the raw amino-acid sequence, 196 residues long: Ribosomal RNA large subunit methyltransferase E (196 aa).

The S-adenosyl-L-methionine site is built by Gly-52, Trp-54, Asp-72, Asp-88, and Asp-111. The active-site Proton acceptor is Lys-151.

Belongs to the class I-like SAM-binding methyltransferase superfamily. RNA methyltransferase RlmE family.

The protein localises to the cytoplasm. The catalysed reaction is uridine(2552) in 23S rRNA + S-adenosyl-L-methionine = 2'-O-methyluridine(2552) in 23S rRNA + S-adenosyl-L-homocysteine + H(+). Functionally, specifically methylates the uridine in position 2552 of 23S rRNA at the 2'-O position of the ribose in the fully assembled 50S ribosomal subunit. This is Ribosomal RNA large subunit methyltransferase E from Cenarchaeum symbiosum (strain A).